The primary structure comprises 285 residues: Complex I assembly factor TIMMDC1, mitochondrial (285 aa).

A run of 4 helical transmembrane segments spans residues 80–100, 137–159, 165–185, and 188–208; these read AALS…FIYA, RWSW…LTVY, LSHF…NLGL, and LVAG…LLMA.

It belongs to the Tim17/Tim22/Tim23 family. In terms of assembly, associates with the intermediate 315 kDa subcomplex of incompletely assembled complex I. Interacts with TMEM70.

The protein resides in the mitochondrion membrane. Its function is as follows. Chaperone protein involved in the assembly of the mitochondrial NADH:ubiquinone oxidoreductase complex (complex I). Participates in constructing the membrane arm of complex I. The chain is Complex I assembly factor TIMMDC1, mitochondrial from Rattus norvegicus (Rat).